The sequence spans 729 residues: Catalase-peroxidase (729 aa).

Residues 1-26 (MTMDQKTDNAGKCPVAHTAPRGRSNR) are disordered. The tryptophyl-tyrosyl-methioninium (Trp-Tyr) (with M-245) cross-link spans 97-219 (WHSAGTYRIT…LAAVQMGLIY (123 aa)). His98 acts as the Proton acceptor in catalysis. Residues 219–245 (YVNPEGPNGNPDPVAAAHDIRETFARM) constitute a cross-link (tryptophyl-tyrosyl-methioninium (Tyr-Met) (with W-97)). His260 contributes to the heme b binding site.

Belongs to the peroxidase family. Peroxidase/catalase subfamily. Homodimer or homotetramer. Heme b is required as a cofactor. Post-translationally, formation of the three residue Trp-Tyr-Met cross-link is important for the catalase, but not the peroxidase activity of the enzyme.

The catalysed reaction is H2O2 + AH2 = A + 2 H2O. The enzyme catalyses 2 H2O2 = O2 + 2 H2O. Bifunctional enzyme with both catalase and broad-spectrum peroxidase activity. This is Catalase-peroxidase from Sinorhizobium medicae (strain WSM419) (Ensifer medicae).